Reading from the N-terminus, the 69-residue chain is DNA gyrase inhibitor YacG (69 aa).

Residues Cys7, Cys10, Cys26, and Cys30 each contribute to the Zn(2+) site.

This sequence belongs to the DNA gyrase inhibitor YacG family. As to quaternary structure, interacts with GyrB. The cofactor is Zn(2+).

Inhibits all the catalytic activities of DNA gyrase by preventing its interaction with DNA. Acts by binding directly to the C-terminal domain of GyrB, which probably disrupts DNA binding by the gyrase. This chain is DNA gyrase inhibitor YacG, found in Shewanella baltica (strain OS195).